Consider the following 499-residue polypeptide: CD-NTase-associated protein 4 (499 aa).

Residues 1–226 (MATSVLANWH…DFRFDGAARA (226 aa)) form an N-terminal endonuclease domain region. Catalysis depends on residues aspartate 49 and glutamine 72. Position 49 (aspartate 49) interacts with Mg(2+). A Mg(2+)-binding site is contributed by isoleucine 73. Residue lysine 74 is part of the active site. The tract at residues 258–464 (FRNVALRSFS…HIFSAAPNAV (207 aa)) is C-terminal SAVED domain.

This sequence belongs to the Cap4 nuclease family. A monomer in the absence of ligand, in its presence it forms oligomers. Mg(2+) is required as a cofactor.

Its activity is regulated as follows. DNase activity is activated upon ligand binding (cAAG). Inhibited by EDTA. Its function is as follows. Effector DNase of a CBASS antivirus system. CBASS (cyclic oligonucleotide-based antiphage signaling system) provides immunity against bacteriophages. The CD-NTase protein (CdnD) synthesizes cyclic nucleotides in response to infection; these serve as specific second messenger signals. The signals activate a diverse range of effectors, leading to bacterial cell death and thus abortive phage infection. A type II-C(AAG) CBASS system. Functionally, binds second messenger 3',3',3'-cyclic AMP-AMP-GMP (cAAG). In the presence of cAAG (synthesized by the cognate CD-NTase protein in the CBASS operon), endonucleolytically degrades dsDNA to approximately 17 bp length fragments, with a preference for 5'-C|NG sites. Only binds DNA in the presence of cAAG. Not activated by c-di-AMP, c-di-GMP, 3',3'-cyclic GMP-AMP (cGAMP) or the second messenger of A.baumanii strain ATCC 27244. Protects E.coli against phage T2 infection. When the cdnD-cap2-cap3-cap4 operon is introduced in E.coli there is a more than 10(3) decrease in the efficiency of T2 plaque formation. The operon does not protect against phage T5 and only about 10-fold against T7. Expression of cdnD-cap4 alone protects E.coli against phage T2 infection. The protein is CD-NTase-associated protein 4 of Enterobacter hormaechei subsp. hoffmannii (strain UCI 50).